The primary structure comprises 278 residues: Small ribosomal subunit protein uS2 (278 aa).

A disordered region spans residues 235-278 (QRRKDHGEGGQQAAGGGRGQRDEINVYQGGRGGRGGGPRQQQAS). 2 stretches are compositionally biased toward gly residues: residues 243 to 252 (GGQQAAGGGR) and 263 to 272 (GGRGGRGGGP).

It belongs to the universal ribosomal protein uS2 family.

In Sorangium cellulosum (strain So ce56) (Polyangium cellulosum (strain So ce56)), this protein is Small ribosomal subunit protein uS2.